An 85-amino-acid chain; its full sequence is 4-hydroxyphenylacetate decarboxylase small subunit (85 aa).

The [4Fe-4S] cluster site is built by histidine 4, cysteine 7, cysteine 20, cysteine 34, cysteine 43, cysteine 46, cysteine 60, and cysteine 78.

It belongs to the HPA decarboxylase small subunit family. As to quaternary structure, heterooctamer consisting of 4 large (HpdB) subunits and 4 small (HpdC) subunits, arranged as a tetramer of heterodimers. [4Fe-4S] cluster is required as a cofactor.

The enzyme catalyses 4-hydroxyphenylacetate + H(+) = 4-methylphenol + CO2. It carries out the reaction 3,4-dihydroxyphenylacetate + H(+) = 4-methylcatechol + CO2. Its function is as follows. Component of the HPA decarboxylase that decarboxylates phenylacetates with a hydroxyl group in the p-position. Active toward 4-hydroxyphenylacetate and 3,4-dihydroxyphenylacetate, forming 4-methylphenol and 4-methylcatechol, respectively. Is likely involved in the catabolism of aromatic amino acids such as tyrosine fermentation. 4-methylphenol (p-cresol) formation provides metabolic toxicity, which allows an active suppression of other microbes and may provide growth advantages for the producers in highly competitive environments. The small subunit is essential for enzymatic activity of HPA decarboxylase, and also seems to be involved in the regulation of the enzyme oligomeric state and catalytic activity. This is 4-hydroxyphenylacetate decarboxylase small subunit from Clostridioides difficile (strain 630) (Peptoclostridium difficile).